The primary structure comprises 599 residues: DNA primase (599 aa).

A CHC2-type zinc finger spans residues 38-62; sequence CPFHDEKTPSFTVSEDKQICHCFGC. Positions 260-341 constitute a Toprim domain; the sequence is DEIVLLEGFM…NVFVIQLPSG (82 aa). 3 residues coordinate Mg(2+): Glu266, Asp310, and Asp312.

It belongs to the DnaG primase family. Monomer. Interacts with DnaB. Requires Zn(2+) as cofactor. Mg(2+) serves as cofactor.

The catalysed reaction is ssDNA + n NTP = ssDNA/pppN(pN)n-1 hybrid + (n-1) diphosphate.. In terms of biological role, RNA polymerase that catalyzes the synthesis of short RNA molecules used as primers for DNA polymerase during DNA replication. The chain is DNA primase from Staphylococcus aureus (strain COL).